A 460-amino-acid polypeptide reads, in one-letter code: 2-methylcitrate synthase, mitochondrial (460 aa).

Residues 1–24 (MALPLRTARHASRLAQTIGRRGYA) constitute a mitochondrion transit peptide. CoA-binding residues include arginine 69 and lysine 187. An oxaloacetate-binding site is contributed by histidine 264. Leucine 299 is a binding site for CoA. The active site involves histidine 300. The CoA site is built by valine 341, glycine 343, and tyrosine 344. The oxaloacetate site is built by histidine 346 and arginine 355. Histidine 346 is an active-site residue. CoA contacts are provided by threonine 395, lysine 396, and asparagine 401. Residue aspartate 403 is part of the active site. Positions 429 and 449 each coordinate oxaloacetate.

It belongs to the citrate synthase family. As to quaternary structure, homodimer.

It is found in the mitochondrion matrix. The catalysed reaction is propanoyl-CoA + oxaloacetate + H2O = (2S,3S)-2-methylcitrate + CoA + H(+). It catalyses the reaction oxaloacetate + acetyl-CoA + H2O = citrate + CoA + H(+). The protein operates within organic acid metabolism; propanoate degradation. Partially inhibited by ATP. Catalyzes the synthesis of (2S,3S)-2-methylcitrate from propionyl-CoA and oxaloacetate and also from acetyl-CoA and oxaloacetate with a greater efficiency. Also has citrate synthase activity and can substitute for the loss of citA activity. This is 2-methylcitrate synthase, mitochondrial from Emericella nidulans (strain FGSC A4 / ATCC 38163 / CBS 112.46 / NRRL 194 / M139) (Aspergillus nidulans).